We begin with the raw amino-acid sequence, 157 residues long: Protein Smg homolog (157 aa).

Belongs to the Smg family.

The chain is Protein Smg homolog from Stenotrophomonas maltophilia (strain R551-3).